The following is a 672-amino-acid chain: Flap endonuclease 1 (672 aa).

The tract at residues 1-106 (MGIKGLTKFI…SELEKRGEKR (106 aa)) is N-domain. Asp-34 provides a ligand contact to Mg(2+). DNA is bound by residues Arg-47 and Arg-72. 5 residues coordinate Mg(2+): Asp-88, Glu-160, Glu-162, Asp-181, and Asp-183. The tract at residues 124–266 (EIKKQSGRTV…KTAYNLIKEY (143 aa)) is I-domain. Glu-160 is a binding site for DNA. DNA is bound by residues Gly-244 and Asp-246. Asp-246 lines the Mg(2+) pocket. The tract at residues 349-357 (TQRRLDNFF) is interaction with PCNA. Residues 371–610 (ETKKEQTLPA…EDSPNSYNNI (240 aa)) form a disordered region. Composition is skewed to basic and acidic residues over residues 413–493 (MKEE…KKSL), 502–526 (DSDKESESGNIIKNEKQNMDDEKIN), and 535–548 (DHSRIRHTENKDNI). The span at 549 to 584 (SDINNNNNNNNSSSNNNNISNNHFNSVSSNSTFNSS) shows a compositional bias: low complexity. Positions 587–603 (LKSEDTLKSNSPLKEDS) are enriched in basic and acidic residues.

The protein belongs to the XPG/RAD2 endonuclease family. FEN1 subfamily. Interacts with PCNA1 and PCNA2. Three molecules of FEN1 bind to one PCNA trimer with each molecule binding to one PCNA monomer. PCNA stimulates the nuclease activity without altering cleavage specificity. It depends on Mg(2+) as a cofactor. Post-translationally, phosphorylated. Phosphorylation upon DNA damage induces relocalization to the nuclear plasma.

It is found in the nucleus. The protein localises to the nucleolus. Its subcellular location is the nucleoplasm. It localises to the mitochondrion. Functionally, structure-specific nuclease with 5'-flap endonuclease and 5'-3' exonuclease activities involved in DNA replication and repair. During DNA replication, cleaves the 5'-overhanging flap structure that is generated by displacement synthesis when DNA polymerase encounters the 5'-end of a downstream Okazaki fragment. It enters the flap from the 5'-end and then tracks to cleave the flap base, leaving a nick for ligation. Also involved in the long patch base excision repair (LP-BER) pathway, by cleaving within the apurinic/apyrimidinic (AP) site-terminated flap. Acts as a genome stabilization factor that prevents flaps from equilibrating into structures that lead to duplications and deletions. Also possesses 5'-3' exonuclease activity on nicked or gapped double-stranded DNA, and exhibits RNase H activity. Also involved in replication and repair of rDNA and in repairing mitochondrial DNA. In Plasmodium falciparum (isolate 3D7), this protein is Flap endonuclease 1.